The sequence spans 411 residues: D-ribitol-5-phosphate cytidylyltransferase (411 aa).

The protein belongs to the IspD/TarI cytidylyltransferase family. IspD subfamily. In terms of assembly, homodimer.

The protein localises to the cytoplasm. Its subcellular location is the cytosol. The enzyme catalyses D-ribitol 5-phosphate + CTP + H(+) = CDP-L-ribitol + diphosphate. It catalyses the reaction D-ribose 5-phosphate + CTP + H(+) = CDP-D-ribose + diphosphate. It carries out the reaction D-ribulose 5-phosphate + CTP + H(+) = CDP-D-ribulose + diphosphate. Its pathway is protein modification; protein glycosylation. In terms of biological role, cytidylyltransferase required for protein O-linked mannosylation. Catalyzes the formation of CDP-ribitol nucleotide sugar from D-ribitol 5-phosphate. CDP-ribitol is a substrate of FKTN during the biosynthesis of the phosphorylated O-mannosyl trisaccharide (N-acetylgalactosamine-beta-3-N-acetylglucosamine-beta-4-(phosphate-6-)mannose), a carbohydrate structure present in alpha-dystroglycan (DAG1), which is required for binding laminin G-like domain-containing extracellular proteins with high affinity. Shows activity toward other pentose phosphate sugars and mediates formation of CDP-ribulose or CDP-ribose using CTP and ribulose-5-phosphate or ribose-5-phosphate, respectively. Not involved in dolichol production. The protein is D-ribitol-5-phosphate cytidylyltransferase (crppa) of Xenopus tropicalis (Western clawed frog).